The sequence spans 514 residues: Alpha-amylase (514 aa).

The signal sequence occupies residues 1–31; sequence MIQKRKRTVSFRLVLMCTLLFVSLPITKTSA. Residues Asn133, Asp190, Ala212, Asp214, Asp225, Asp231, Asp233, and Asp235 each coordinate Ca(2+). Asp190 is a Na(+) binding site. Na(+)-binding residues include Asp214, Asp225, and Asp231. Asp262 serves as the catalytic Nucleophile. His266 contacts Ca(2+). Residue Glu292 is the Proton donor of the active site. Ca(2+)-binding residues include Gly331, Asp438, and Asp461.

The protein belongs to the glycosyl hydrolase 13 family. Monomer. Ca(2+) is required as a cofactor. It depends on Na(+) as a cofactor.

Its subcellular location is the secreted. It carries out the reaction Endohydrolysis of (1-&gt;4)-alpha-D-glucosidic linkages in polysaccharides containing three or more (1-&gt;4)-alpha-linked D-glucose units.. This chain is Alpha-amylase, found in Bacillus amyloliquefaciens (Bacillus velezensis).